A 523-amino-acid polypeptide reads, in one-letter code: Excitatory amino acid transporter 3 (523 aa).

Topologically, residues 1-18 (MGKPTSSGCDWRRFLRNH) are cytoplasmic. A helical membrane pass occupies residues 19–38 (WLLLSTVAAVVLGIVLGVVV). Topologically, residues 39–61 (RGHSELSNLDKFYFAFPGEILMR) are extracellular. Residues 62–82 (MLKLVILPLIVSSMITGVAAL) form a helical membrane-spanning segment. The Cytoplasmic segment spans residues 83-93 (DSNVSGKIGLR). A helical transmembrane segment spans residues 94-114 (AVVYYFSTTVIAVILGIVLVV). Residues tyrosine 98, threonine 101, and threonine 102 each contribute to the Na(+) site. Topologically, residues 115–204 (SIKPGVTQKV…KTKEYKIVGL (90 aa)) are extracellular. N-linked (GlcNAc...) asparagine glycosylation is found at asparagine 128, asparagine 178, and asparagine 194. Residues 205 to 228 (YSDGINVLGLIIFCLVFGLVIGKM) traverse the membrane as a helical segment. Over 229-237 (GEKGQILVD) the chain is Cytoplasmic. A helical membrane pass occupies residues 238–265 (FFNALSDATMKIVQIIMCYMPIGILFLI). Over 266–285 (AGKIIEVEDWEIFRKLGLYM) the chain is Extracellular. The helical transmembrane segment at 286-307 (ATVLSGLAIHSLIVLPLLYFIV) threads the bilayer. The Cytoplasmic segment spans residues 308-312 (VRKNP). Positions 313 to 343 (FRFALGMAQALLTALMISSSSATLPVTFRCA) form an intramembrane region, discontinuously helical. Serine 330 and serine 332 together coordinate L-aspartate. The Cytoplasmic segment spans residues 344-352 (EEKNQVDKR). Residues 353–379 (ITRFVLPVGATINMDGTALYEAVAAVF) traverse the membrane as a helical segment. Na(+) contacts are provided by glycine 361, threonine 363, asparagine 365, and aspartate 367. L-aspartate is bound at residue threonine 369. The Extracellular segment spans residues 380–392 (IAQLNGLDLSIGQ). The discontinuously helical intramembrane region spans 393–426 (IVTISITATAASIGAAGVPQAGLVTMVIVLSAVG). Residues serine 404, isoleucine 405, and alanine 407 each contribute to the Na(+) site. L-aspartate is bound at residue valine 410. Residues 427 to 439 (LPAEDVTLIIAVD) lie on the Extracellular side of the membrane. The chain crosses the membrane as a helical span at residues 440–461 (WLLDRFRTMVNVLGDAFGTGIV). L-aspartate is bound by residues arginine 446, threonine 447, and asparagine 450. Positions 450 and 454 each coordinate Na(+). The Cytoplasmic segment spans residues 462–523 (EKLSKKELEQ…TISFTQTSQF (62 aa)). Phosphoserine is present on residues serine 516 and serine 521.

Belongs to the dicarboxylate/amino acid:cation symporter (DAACS) (TC 2.A.23) family. SLC1A1 subfamily. In terms of assembly, homotrimer. Interacts with ARL6IP5. Interacts with RTN2 (via N-terminus); the interaction promotes cell surface expression of SLC1A1. Interacts with SORCS2; this interaction is important for normal expression at the cell membrane. Detected on neurons in the brain cortex, dentate gyrus and hippocampus CA2 region (at protein level). Expressed in whole brain, brain cortex, hippocampus, cerebellum, lung, kidney, small intestine and skeletal muscle. Expressed in the renal outer medulla, medullary ray and cortex (at protein level).

Its subcellular location is the cell membrane. The protein resides in the apical cell membrane. It localises to the synapse. It is found in the synaptosome. The protein localises to the early endosome membrane. Its subcellular location is the late endosome membrane. The protein resides in the recycling endosome membrane. It carries out the reaction K(+)(in) + L-glutamate(out) + 3 Na(+)(out) + H(+)(out) = K(+)(out) + L-glutamate(in) + 3 Na(+)(in) + H(+)(in). The enzyme catalyses K(+)(in) + L-aspartate(out) + 3 Na(+)(out) + H(+)(out) = K(+)(out) + L-aspartate(in) + 3 Na(+)(in) + H(+)(in). The catalysed reaction is D-aspartate(out) + K(+)(in) + 3 Na(+)(out) + H(+)(out) = D-aspartate(in) + K(+)(out) + 3 Na(+)(in) + H(+)(in). It catalyses the reaction K(+)(in) + L-cysteine(out) + 3 Na(+)(out) + H(+)(out) = K(+)(out) + L-cysteine(in) + 3 Na(+)(in) + H(+)(in). Its function is as follows. Sodium-dependent, high-affinity amino acid transporter that mediates the uptake of L-glutamate and also L-aspartate and D-aspartate. Can also transport L-cysteine. Functions as a symporter that transports one amino acid molecule together with two or three Na(+) ions and one proton, in parallel with the counter-transport of one K(+) ion. Mediates Cl(-) flux that is not coupled to amino acid transport; this avoids the accumulation of negative charges due to aspartate and Na(+) symport. Plays an important role in L-glutamate and L-aspartate reabsorption in renal tubuli. Plays a redundant role in the rapid removal of released glutamate from the synaptic cleft, which is essential for terminating the postsynaptic action of glutamate. Contributes to glutathione biosynthesis and protection against oxidative stress via its role in L-glutamate and L-cysteine transport. Negatively regulated by ARL6IP5. The sequence is that of Excitatory amino acid transporter 3 (Slc1a1) from Mus musculus (Mouse).